The primary structure comprises 110 residues: Nucleoid-associated protein Mkms_4993 (110 aa).

It belongs to the YbaB/EbfC family. As to quaternary structure, homodimer.

The protein resides in the cytoplasm. It is found in the nucleoid. In terms of biological role, binds to DNA and alters its conformation. May be involved in regulation of gene expression, nucleoid organization and DNA protection. The polypeptide is Nucleoid-associated protein Mkms_4993 (Mycobacterium sp. (strain KMS)).